The following is a 226-amino-acid chain: Urease accessory protein UreF (226 aa).

Belongs to the UreF family. In terms of assembly, ureD, UreF and UreG form a complex that acts as a GTP-hydrolysis-dependent molecular chaperone, activating the urease apoprotein by helping to assemble the nickel containing metallocenter of UreC. The UreE protein probably delivers the nickel.

Its subcellular location is the cytoplasm. Its function is as follows. Required for maturation of urease via the functional incorporation of the urease nickel metallocenter. This chain is Urease accessory protein UreF, found in Burkholderia lata (strain ATCC 17760 / DSM 23089 / LMG 22485 / NCIMB 9086 / R18194 / 383).